We begin with the raw amino-acid sequence, 695 residues long: NAD(P)H-quinone oxidoreductase subunit 5, chloroplastic (695 aa).

Helical transmembrane passes span 1 to 21 (WIIP…LILF), 32 to 52 (WAFQ…YLSI), 81 to 101 (IDPL…MVLI), 117 to 137 (FAYM…SNLI), 139 to 159 (IYIF…FWFT), 177 to 197 (GDFG…SFEF), 211 to 231 (NEVN…GAVA), 250 to 270 (TPIS…FLVA), 278 to 298 (VIPY…LLGA), 319 to 339 (LGYM…FHLI), 346 to 366 (ALLF…VGYS), 388 to 408 (ITFL…CFWS), 417 to 437 (WLYS…TAFY), 535 to 555 (LFPI…GIPF), and 594 to 614 (VLSV…YKPI).

It belongs to the complex I subunit 5 family. NDH is composed of at least 16 different subunits, 5 of which are encoded in the nucleus.

Its subcellular location is the plastid. It is found in the chloroplast thylakoid membrane. It catalyses the reaction a plastoquinone + NADH + (n+1) H(+)(in) = a plastoquinol + NAD(+) + n H(+)(out). It carries out the reaction a plastoquinone + NADPH + (n+1) H(+)(in) = a plastoquinol + NADP(+) + n H(+)(out). In terms of biological role, NDH shuttles electrons from NAD(P)H:plastoquinone, via FMN and iron-sulfur (Fe-S) centers, to quinones in the photosynthetic chain and possibly in a chloroplast respiratory chain. The immediate electron acceptor for the enzyme in this species is believed to be plastoquinone. Couples the redox reaction to proton translocation, and thus conserves the redox energy in a proton gradient. This chain is NAD(P)H-quinone oxidoreductase subunit 5, chloroplastic (ndhF), found in Capsicum baccatum (Peruvian pepper).